The following is a 255-amino-acid chain: MSSHRRKAKGRNRRSHRAMRVAHLELATYELAATESNPESSHPGYEAAMADRPQPGWRESLKMRVSKPFGMLMLSIWILLFVCYYLSYYLCSGSSYFVLANGHILPNSENAHGQSLEEDSALEALLNFFFPTTCNLRENQVAKPCNELQDLSESECLRHKCCFSSSGTTSFKCFAPFRDVPKQMMQMFGLGAISLILVCLPIYCRSLFWRSEPADDLQRQDNRVVTGLKKQRRKRKRKSEMLQKAARGREEHGDE.

The Cytoplasmic segment spans residues 1 to 68 (MSSHRRKAKG…ESLKMRVSKP (68 aa)). The chain crosses the membrane as a helical span at residues 69-89 (FGMLMLSIWILLFVCYYLSYY). The Extracellular portion of the chain corresponds to 90 to 183 (LCSGSSYFVL…FAPFRDVPKQ (94 aa)). The 60-residue stretch at 125 to 184 (LLNFFFPTTCNLRENQVAKPCNELQDLSESECLRHKCCFSSSGTTSFKCFAPFRDVPKQM) folds into the P-type domain. A helical transmembrane segment spans residues 184-204 (MMQMFGLGAISLILVCLPIYC). At 205–255 (RSLFWRSEPADDLQRQDNRVVTGLKKQRRKRKRKSEMLQKAARGREEHGDE) the chain is on the cytoplasmic side. A disordered region spans residues 220 to 255 (QDNRVVTGLKKQRRKRKRKSEMLQKAARGREEHGDE). Positions 229–238 (KKQRRKRKRK) are enriched in basic residues.

As to expression, testis-specific. Expressed in melanoma, sarcoma, lung, breast, bladder, esophageal and ovarian cancers.

The protein resides in the membrane. The chain is FMR1 neighbor protein from Homo sapiens (Human).